The primary structure comprises 150 residues: MKTFHLRKEDVKRDWYIIDAKGKNLGRLASLIANVLRGKHKPTFQPDVDCGDYVVVINADKFTVTGKKLTDKEYKFHTNAPGGLKVRNLQWMIEHKPTEALALAVERMLPKNKLQKRYMKRLKLYAGETHPHTAQNLKPLEEVSKLWKAI.

The protein belongs to the universal ribosomal protein uL13 family. In terms of assembly, part of the 50S ribosomal subunit.

Functionally, this protein is one of the early assembly proteins of the 50S ribosomal subunit, although it is not seen to bind rRNA by itself. It is important during the early stages of 50S assembly. The protein is Large ribosomal subunit protein uL13 of Sulfurihydrogenibium sp. (strain YO3AOP1).